The primary structure comprises 368 residues: Glutamyl-tRNA reductase (368 aa).

Residues 43 to 46 (TCHR), S89, 94 to 96 (EHQ), and Q100 contribute to the substrate site. C44 (nucleophile) is an active-site residue. NADP(+) is bound at residue 164-169 (GTGMMG).

Belongs to the glutamyl-tRNA reductase family. As to quaternary structure, homodimer.

It carries out the reaction (S)-4-amino-5-oxopentanoate + tRNA(Glu) + NADP(+) = L-glutamyl-tRNA(Glu) + NADPH + H(+). It participates in porphyrin-containing compound metabolism; protoporphyrin-IX biosynthesis; 5-aminolevulinate from L-glutamyl-tRNA(Glu): step 1/2. Its function is as follows. Catalyzes the NADPH-dependent reduction of glutamyl-tRNA(Glu) to glutamate 1-semialdehyde (GSA). In Thermosipho melanesiensis (strain DSM 12029 / CIP 104789 / BI429), this protein is Glutamyl-tRNA reductase.